We begin with the raw amino-acid sequence, 828 residues long: E3 ubiquitin-protein ligase bre-1 (828 aa).

A disordered region spans residues 1–25; that stretch reads MMKRNNEGIGGEGVANSPPDDTQQK. An interaction with ubc-1 region spans residues 1–309; it reads MMKRNNEGIG…SREIEALRAD (309 aa). Coiled-coil stretches lie at residues 53–92 and 185–251; these read QAAK…FLKV and HKEL…TEKQ. A compositionally biased stretch (low complexity) spans 269-298; it reads ASGNATASSSATLNQSEKKMGSPGSPPSES. The interval 269–304 is disordered; sequence ASGNATASSSATLNQSEKKMGSPGSPPSESTSREIE. Coiled-coil stretches lie at residues 311-345, 460-616, and 660-756; these read DEQA…KMET, VNTL…RNLK, and DEVL…NDSA. The RING-type zinc finger occupies 776 to 815; sequence CPSCKTRPKDCIMLKCYHLFCETCIKTMYDTRQRKCPKCN.

This sequence belongs to the BRE1 family. In terms of assembly, interacts with ubc-1. Interacts with mrg-1.

It localises to the nucleus. The enzyme catalyses S-ubiquitinyl-[E2 ubiquitin-conjugating enzyme]-L-cysteine + [acceptor protein]-L-lysine = [E2 ubiquitin-conjugating enzyme]-L-cysteine + N(6)-ubiquitinyl-[acceptor protein]-L-lysine.. The protein operates within protein modification; protein ubiquitination. Functionally, E3 ubiquitin-protein ligase that mediates monoubiquitination of 'Lys-117' of histone H2B. H2B 'Lys-117' ubiquitination gives a specific tag for epigenetic transcriptional activation and is also prerequisite for histone H3 'Lys-4' and 'Lys-79' methylation. Involved in regulating stem cell proliferative fate. The chain is E3 ubiquitin-protein ligase bre-1 from Caenorhabditis briggsae.